The chain runs to 356 residues: Tricetin 3',4',5'-O-trimethyltransferase (356 aa).

Position 123–129 (123–129 (MNQDKVL)) interacts with substrate. A substrate binding region spans residues 155–173 (AFEYHGTDPRFNRVFNEGM). The S-adenosyl-L-methionine site is built by Gly-201, Asp-224, Asp-244, Met-245, and Lys-258. His-262 (proton acceptor) is an active-site residue.

It belongs to the class I-like SAM-binding methyltransferase superfamily. Cation-independent O-methyltransferase family. COMT subfamily. Homodimer. The monomer is fully active and dimerization is not required for sequential methylation. In terms of tissue distribution, expressed in roots, stems and leaves.

It carries out the reaction tricetin + 3 S-adenosyl-L-methionine = 3',4',5'-O-trimethyltricetin + 3 S-adenosyl-L-homocysteine + 3 H(+). Flavonoid B-ring-specific O-methyltransferase with a preference for flavones &gt; dihydroflavones &gt; flavonols that possess at least two B-ring hydroxyl groups. Active with tricetin, 5-hydroxyferulic acid, luteolin, quercitin, eriodictyol, quercetagetin, taxifolin, gossypetin and myricetin. No activity with naringenin, apigenin, kaempferol, 7,8-dihydroxy- or 5,7,8-trihydroxy flavones, chlorogenic acid, gallic acid or daphnetin. Catalyzes the sequential O-methylation of tricetin via 3'-O-methyltricetin, 3',5'-O-methyltricetin to 3',4',5'-O-trimethyltricetin. May also be involved in S lignin biosynthesis. The protein is Tricetin 3',4',5'-O-trimethyltransferase (OMT2) of Triticum aestivum (Wheat).